We begin with the raw amino-acid sequence, 320 residues long: Malate dehydrogenase (320 aa).

Residues 10–15 (GAGQIG) and Asp-34 each bind NAD(+). Residues Arg-83 and Arg-89 each coordinate substrate. NAD(+) is bound by residues Asn-96 and 119–121 (ITN). The substrate site is built by Asn-121 and Arg-152. The Proton acceptor role is filled by His-176.

This sequence belongs to the LDH/MDH superfamily. MDH type 3 family.

It catalyses the reaction (S)-malate + NAD(+) = oxaloacetate + NADH + H(+). In terms of biological role, catalyzes the reversible oxidation of malate to oxaloacetate. The protein is Malate dehydrogenase of Methylobacterium sp. (strain 4-46).